We begin with the raw amino-acid sequence, 530 residues long: Arginine-containing cyclodipeptide synthase pthA (530 aa).

A Conserved DDXXE motif motif is present at residues aspartate 419–glutamate 423.

This sequence belongs to the arginine-containing cyclodipeptide synthase family.

It carries out the reaction L-aspartyl-tRNA(Asp) + L-arginyl-tRNA(Arg) = cyclo(L-arginyl-L-aspartyl) + tRNA(Asp) + tRNA(Arg) + 2 H(+). It participates in secondary metabolite biosynthesis. Its function is as follows. Arginine-containing cyclodipeptide synthase; part of the cluster that mediates the biosynthesis of a highly modified cyclo-arginine-aspartate dipeptide (cRD). Within the pathway, pthA acts as the scaffold-generating enzyme and is responsible for formation of the cyclo-Arg-Asp diketopiperazine (cRW) from L-arginyl-tRNA(Arg) + L-aspartyl-tRNA(Asp). Additional enzymes from the cluster then further modify the cyclo-Arg-Asp diketopiperazine (cRW) scaffold. This is Arginine-containing cyclodipeptide synthase pthA from Penicillium thymicola.